A 188-amino-acid chain; its full sequence is Adenylate kinase (188 aa).

Residue 10 to 15 (GCGKGT) coordinates ATP. The segment at 30–59 (STGDMLRHARAAGTELGRRVAAIMDGGNLV) is NMP. AMP contacts are provided by residues Thr-31, Arg-36, 57-59 (NLV), 85-88 (GFPR), and Gln-92. Residues 126-136 (KRAEEEGRPDD) form an LID region. Arg-127 lines the ATP pocket. AMP is bound by residues Arg-133 and Arg-144. Gly-172 contacts ATP.

This sequence belongs to the adenylate kinase family. Monomer.

The protein localises to the cytoplasm. It carries out the reaction AMP + ATP = 2 ADP. The protein operates within purine metabolism; AMP biosynthesis via salvage pathway; AMP from ADP: step 1/1. Catalyzes the reversible transfer of the terminal phosphate group between ATP and AMP. Plays an important role in cellular energy homeostasis and in adenine nucleotide metabolism. The sequence is that of Adenylate kinase from Maricaulis maris (strain MCS10) (Caulobacter maris).